We begin with the raw amino-acid sequence, 317 residues long: MPMQGAQKRLLGSLNSTPTATPNLGLAANHTGAPCLEVSIPDGLFLSLGLVSLVENVLVVAAIAKNRNLHSPMYCFICCLALSDLLVSSSNMLETAVILLLEAGALATRASVVQQLQNTIDVLTCSSMLCSLCFLGAIAVDRHVSIFYALRYHSIMTLARARRAIAAIWVASVLSSTLFIAYCDHAXVLLCLVVFFLAMLVLMAVLYVHMLARACQHAQGITRLHQRQPPAHQGFGFRGAATLTILLGIFFLCWGPFFLHLTLVVLCPQHLTCSCIFKNFKVFLTLIICSTIIDPLIYAFRSQELRRTLKELLLCSW.

The Extracellular segment spans residues 1–37; it reads MPMQGAQKRLLGSLNSTPTATPNLGLAANHTGAPCLE. The N-linked (GlcNAc...) asparagine glycan is linked to N29. A helical transmembrane segment spans residues 38–63; that stretch reads VSIPDGLFLSLGLVSLVENVLVVAAI. The Cytoplasmic segment spans residues 64-72; the sequence is AKNRNLHSP. The chain crosses the membrane as a helical span at residues 73 to 93; that stretch reads MYCFICCLALSDLLVSSSNML. The Extracellular segment spans residues 94–118; it reads ETAVILLLEAGALATRASVVQQLQN. A helical membrane pass occupies residues 119-140; that stretch reads TIDVLTCSSMLCSLCFLGAIAV. The Cytoplasmic segment spans residues 141–163; sequence DRHVSIFYALRYHSIMTLARARR. Residues 164-183 form a helical membrane-spanning segment; sequence AIAAIWVASVLSSTLFIAYC. Over 184–191 the chain is Extracellular; sequence DHAXVLLC. A helical transmembrane segment spans residues 192-211; the sequence is LVVFFLAMLVLMAVLYVHML. The Cytoplasmic portion of the chain corresponds to 212–240; sequence ARACQHAQGITRLHQRQPPAHQGFGFRGA. A helical membrane pass occupies residues 241-266; that stretch reads ATLTILLGIFFLCWGPFFLHLTLVVL. Residues 267 to 279 lie on the Extracellular side of the membrane; it reads CPQHLTCSCIFKN. Residues 280–300 traverse the membrane as a helical segment; it reads FKVFLTLIICSTIIDPLIYAF. The Cytoplasmic segment spans residues 301–317; that stretch reads RSQELRRTLKELLLCSW. C315 carries S-palmitoyl cysteine lipidation.

Belongs to the G-protein coupled receptor 1 family. Interacts with MGRN1, but does not undergo MGRN1-mediated ubiquitination; this interaction competes with GNAS-binding and thus inhibits agonist-induced cAMP production. Interacts with OPN3; the interaction results in a decrease in MC1R-mediated cAMP signaling and ultimately a decrease in melanin production in melanocytes.

The protein localises to the cell membrane. Receptor for MSH (alpha, beta and gamma) and ACTH. The activity of this receptor is mediated by G proteins which activate adenylate cyclase. Mediates melanogenesis, the production of eumelanin (black/brown) and phaeomelanin (red/yellow), via regulation of cAMP signaling in melanocytes. The protein is Melanocyte-stimulating hormone receptor (MC1R) of Ateles paniscus (Black spider monkey).